A 422-amino-acid chain; its full sequence is tRNA hydroxylation protein P (422 aa).

An N-terminal signal peptide occupies residues 1-58; sequence MNQVELLSPAGNLKKLKIALNYGADAVYGGVSHFSLRNRAGKEFTLETFKEGIDYAHA.

Belongs to the peptidase U32 family.

Involved in prephenate-dependent formation of 5-hydroxyuridine (ho5U) modification at position 34 in tRNAs, the first step in 5-carboxymethoxyuridine (cmo5U) biosynthesis. This is tRNA hydroxylation protein P from Helicobacter pylori (strain ATCC 700392 / 26695) (Campylobacter pylori).